The chain runs to 150 residues: UPF0178 protein Reut_B5138 (150 aa).

This sequence belongs to the UPF0178 family.

This Cupriavidus pinatubonensis (strain JMP 134 / LMG 1197) (Cupriavidus necator (strain JMP 134)) protein is UPF0178 protein Reut_B5138.